Consider the following 317-residue polypeptide: D-aminoacyl-tRNA deacylase (317 aa).

It belongs to the DtdA deacylase family. Zn(2+) serves as cofactor. Ubiquitous.

The protein resides in the nucleus. It localises to the cytoplasm. It carries out the reaction a D-aminoacyl-tRNA + H2O = a tRNA + a D-alpha-amino acid + H(+). The catalysed reaction is glycyl-tRNA(Ala) + H2O = tRNA(Ala) + glycine + H(+). In terms of biological role, hydrolyzes D-aminoacyl-tRNA into D-amino acid and free tRNA. Broad specificity toward the amino acid, but strict specificity toward the D-isomer. Seems to be required for ethanol tolerance. In Arabidopsis thaliana (Mouse-ear cress), this protein is D-aminoacyl-tRNA deacylase (GEK1).